The following is a 72-amino-acid chain: Translation initiation factor IF-1 (72 aa).

The 72-residue stretch at 1–72 (MAKEENIEMQ…SKGRIIFRAR (72 aa)) folds into the S1-like domain.

Belongs to the IF-1 family. As to quaternary structure, component of the 30S ribosomal translation pre-initiation complex which assembles on the 30S ribosome in the order IF-2 and IF-3, IF-1 and N-formylmethionyl-tRNA(fMet); mRNA recruitment can occur at any time during PIC assembly.

The protein localises to the cytoplasm. In terms of biological role, one of the essential components for the initiation of protein synthesis. Stabilizes the binding of IF-2 and IF-3 on the 30S subunit to which N-formylmethionyl-tRNA(fMet) subsequently binds. Helps modulate mRNA selection, yielding the 30S pre-initiation complex (PIC). Upon addition of the 50S ribosomal subunit IF-1, IF-2 and IF-3 are released leaving the mature 70S translation initiation complex. This Colwellia psychrerythraea (strain 34H / ATCC BAA-681) (Vibrio psychroerythus) protein is Translation initiation factor IF-1.